Here is a 57-residue protein sequence, read N- to C-terminus: uncharacterized protein (57 aa).

The segment at 1-57 is disordered; it reads MITPIGKNSNSNSNSNSNSNSNSNSNSNSNSNSNSNSNSNSNSNSNSNSNSNSNSNN. The span at 8-57 shows a compositional bias: low complexity; that stretch reads NSNSNSNSNSNSNSNSNSNSNSNSNSNSNSNSNSNSNSNSNSNSNSNSNN.

This is an uncharacterized protein from Dictyostelium discoideum (Social amoeba).